The primary structure comprises 293 residues: MITFSQMLLKLQEFWAKQGCNIVQPYDIPAGAGTFHPATLLRSLDSTPWSTAYVAPSRRPTDGRYGENPNRLGAYYQFQVLIKPSPDNIQDLYLQSLEFLGLDVSKHDIRFVEDNWESPTLGAWGLGWEVWLDGMEVTQFTYFQQVGGLPCSPVAVEITYGTERLAMYLQGVDSVFDIVWNENEFGKTTYADVHKEGEYEFSKYNFEIANTEMLFRHFDDAFNECKSCLGAGLPLPAYDQCMIASHAFNTLDARKAISVTERQNYILKVRELAQGCAVLYKEQESDRLKRVGR.

It belongs to the class-II aminoacyl-tRNA synthetase family. Tetramer of two alpha and two beta subunits.

The protein resides in the cytoplasm. It catalyses the reaction tRNA(Gly) + glycine + ATP = glycyl-tRNA(Gly) + AMP + diphosphate. This chain is Glycine--tRNA ligase alpha subunit, found in Aliarcobacter butzleri (strain RM4018) (Arcobacter butzleri).